Consider the following 289-residue polypeptide: Growth hormone-regulated TBC protein 1 (289 aa).

One can recognise a Rab-GAP TBC domain in the interval 41–211 (LVILTKRAIK…RIWDCLFNEG (171 aa)).

Functionally, may act as a GTPase-activating protein for Rab family protein(s). The polypeptide is Growth hormone-regulated TBC protein 1 (Grtp1) (Rattus norvegicus (Rat)).